The chain runs to 253 residues: Phosphate import ATP-binding protein PstB 1 (253 aa).

Positions 7–248 (LQIRDLSVYY…PKRKETEDYI (242 aa)) constitute an ABC transporter domain. Position 39-46 (39-46 (GPSGSGKS)) interacts with ATP.

Belongs to the ABC transporter superfamily. Phosphate importer (TC 3.A.1.7) family. As to quaternary structure, the complex is composed of two ATP-binding proteins (PstB), two transmembrane proteins (PstC and PstA) and a solute-binding protein (PstS).

The protein localises to the cell membrane. It carries out the reaction phosphate(out) + ATP + H2O = ADP + 2 phosphate(in) + H(+). Functionally, part of the ABC transporter complex PstSACB involved in phosphate import. Responsible for energy coupling to the transport system. The polypeptide is Phosphate import ATP-binding protein PstB 1 (Streptococcus pyogenes serotype M2 (strain MGAS10270)).